The chain runs to 271 residues: uncharacterized protein (271 aa).

The 101-residue stretch at 24–124 (PIILLVHGGG…QVHVMIPHEP (101 aa)) folds into the AB hydrolase-1 domain.

Belongs to the AB hydrolase superfamily.

This is an uncharacterized protein from Bacillus subtilis (strain 168).